A 283-amino-acid polypeptide reads, in one-letter code: Myeloid differentiation primary response protein MyD88-A (283 aa).

In terms of domain architecture, Death spans R27–I105. Residues E106–G143 form an intermediate domain region. The region spanning E147–L281 is the TIR domain.

It localises to the cytoplasm. Adapter protein involved in the Toll-like receptor and IL-1 receptor signaling pathway in the innate immune response. Activates expression of target genes in the Spemann organizer region during early embryonic development. Is required for normal axis formation. This Xenopus laevis (African clawed frog) protein is Myeloid differentiation primary response protein MyD88-A (myd88-a).